Here is a 398-residue protein sequence, read N- to C-terminus: Phosphoglycerate kinase (398 aa).

Residues 23–25 (DFN), R38, 61–64 (HMGK), R122, and R155 contribute to the substrate site. ATP-binding positions include K206, G297, E328, and 354–357 (GGDS).

It belongs to the phosphoglycerate kinase family. In terms of assembly, monomer.

Its subcellular location is the cytoplasm. The catalysed reaction is (2R)-3-phosphoglycerate + ATP = (2R)-3-phospho-glyceroyl phosphate + ADP. It participates in carbohydrate degradation; glycolysis; pyruvate from D-glyceraldehyde 3-phosphate: step 2/5. This chain is Phosphoglycerate kinase, found in Clostridium botulinum (strain Loch Maree / Type A3).